The chain runs to 327 residues: Ribosomal RNA small subunit methyltransferase H (327 aa).

Residues 36 to 38 (GGH), Asp-55, Leu-89, Asp-103, and Gln-110 each bind S-adenosyl-L-methionine. The segment at 286-327 (GAEPASDTEIEQNARAGSVRLRAAERTAAEPGRAHNPTGGVR) is disordered.

This sequence belongs to the methyltransferase superfamily. RsmH family.

The protein localises to the cytoplasm. The enzyme catalyses cytidine(1402) in 16S rRNA + S-adenosyl-L-methionine = N(4)-methylcytidine(1402) in 16S rRNA + S-adenosyl-L-homocysteine + H(+). Functionally, specifically methylates the N4 position of cytidine in position 1402 (C1402) of 16S rRNA. The chain is Ribosomal RNA small subunit methyltransferase H from Parafrankia sp. (strain EAN1pec).